A 301-amino-acid polypeptide reads, in one-letter code: Mitochondrial carnitine/acylcarnitine carrier protein (301 aa).

Alanine 2 is subject to N-acetylalanine. The Cytoplasmic portion of the chain corresponds to 2-12; that stretch reads ADQPKPISPLK. Solcar repeat units follow at residues 8-99, 108-196, and 207-293; these read ISPL…GKKL, LSYP…LKNI, and LSAP…AMKF. Residues 13–31 traverse the membrane as a helical segment; the sequence is NLLAGGFGGVCLVFVGHPL. Residues 32 to 73 are Mitochondrial matrix-facing; that stretch reads DTVKVRLQTQPPSLPGQPPMYSGTFDCFRKTLFREGITGLYR. A helical transmembrane segment spans residues 74 to 93; the sequence is GMAAPIIGVTPMFAVCFFGF. At 94–112 the chain is on the cytoplasmic side; the sequence is GLGKKLQQKHPEDVLSYPQ. A helical membrane pass occupies residues 113–131; that stretch reads LFAAGMLSGVFTTGIMTPG. Over 132–170 the chain is Mitochondrial matrix; that stretch reads ERIKCLLQIQASSGESKYTGTLDCAKKLYQEFGIRGIYK. Lysine 148 and lysine 157 each carry N6-acetyllysine. Lysine 170 carries the post-translational modification N6-acetyllysine; alternate. N6-succinyllysine; alternate is present on lysine 170. Residues 171-190 traverse the membrane as a helical segment; it reads GTVLTLMRDVPASGMYFMTY. The Cytoplasmic portion of the chain corresponds to 191–211; sequence EWLKNIFTPEGKRVSELSAPR. The chain crosses the membrane as a helical span at residues 212–230; sequence ILVAGGIAGIFNWAVAIPP. Topologically, residues 231–267 are mitochondrial matrix; sequence DVLKSRFQTAPPGKYPNGFRDVLRELIRDEGVTSLYK. Residues 268–287 traverse the membrane as a helical segment; sequence GFNAVMIRAFPANAACFLGF. At 288 to 301 the chain is on the cytoplasmic side; it reads EVAMKFLNWATPNL.

It belongs to the mitochondrial carrier (TC 2.A.29) family.

It is found in the mitochondrion inner membrane. The catalysed reaction is O-acetyl-(R)-carnitine(in) + (R)-carnitine(out) = O-acetyl-(R)-carnitine(out) + (R)-carnitine(in). The enzyme catalyses an O-acyl-(R)-carnitine(in) + (R)-carnitine(out) = an O-acyl-(R)-carnitine(out) + (R)-carnitine(in). It carries out the reaction O-propanoyl-(R)-carnitine(in) + (R)-carnitine(out) = O-propanoyl-(R)-carnitine(out) + (R)-carnitine(in). It catalyses the reaction O-hexadecanoyl-(R)-carnitine(in) + (R)-carnitine(out) = O-hexadecanoyl-(R)-carnitine(out) + (R)-carnitine(in). The catalysed reaction is O-octanoyl-(R)-carnitine(in) + (R)-carnitine(out) = O-octanoyl-(R)-carnitine(out) + (R)-carnitine(in). The enzyme catalyses (R)-carnitine(in) = (R)-carnitine(out). Its function is as follows. Mediates the electroneutral exchange of acylcarnitines (O-acyl-(R)-carnitine or L-acylcarnitine) of different acyl chain lengths (ranging from O-acetyl-(R)-carnitine to long-chain O-acyl-(R)-carnitines) with free carnitine ((R)-carnitine or L-carnitine) across the mitochondrial inner membrane, via a ping-pong mechanism. Key player in the mitochondrial oxidation pathway, it translocates the fatty acids in the form of acylcarnitines into the mitochondrial matrix, where the carnitine palmitoyltransferase 2 (CPT-2) activates them to undergo fatty acid beta-oxidation. Catalyzes the unidirectional transport (uniport) of carnitine at lower rates than the antiport (exchange). The protein is Mitochondrial carnitine/acylcarnitine carrier protein of Homo sapiens (Human).